We begin with the raw amino-acid sequence, 185 residues long: MNSLSNLLDNKISVAKIVNSHGVHGEVKIVPFTNVKDVITNLEEVLLYNTSTRNFFFSKVLQVKPLNKFFVLNLRGIKDMDEAKKMIGYEVFIDKKDLPSLNSEEYYWYEILDSEVYYEDGEYVGKVEEIIQTGANDVISIKNLEDDKEVLIPMTDHYIIELKKEDKSIIVKKIEWYENGTNQAD.

The 75-residue stretch at 103–177 (SEEYYWYEIL…SIIVKKIEWY (75 aa)) folds into the PRC barrel domain.

It belongs to the RimM family. As to quaternary structure, binds ribosomal protein uS19.

It is found in the cytoplasm. In terms of biological role, an accessory protein needed during the final step in the assembly of 30S ribosomal subunit, possibly for assembly of the head region. Essential for efficient processing of 16S rRNA. May be needed both before and after RbfA during the maturation of 16S rRNA. It has affinity for free ribosomal 30S subunits but not for 70S ribosomes. The chain is Ribosome maturation factor RimM from Petrotoga mobilis (strain DSM 10674 / SJ95).